Consider the following 412-residue polypeptide: Putative competence-damage inducible protein (412 aa).

The protein belongs to the CinA family.

In Bacillus cytotoxicus (strain DSM 22905 / CIP 110041 / 391-98 / NVH 391-98), this protein is Putative competence-damage inducible protein.